A 232-amino-acid chain; its full sequence is Phycobilisome rod-core linker polypeptide cpcG (232 aa).

In terms of domain architecture, PBS-linker spans 11-191 (STQNQRVDGY…PRYGADFKEK (181 aa)).

This sequence belongs to the phycobilisome linker protein family. As to quaternary structure, the phycobilisome is a hemidiscoidal structure that is composed of two distinct substructures: a core complex and a number of rods radiating from the core.

It localises to the plastid. The protein resides in the chloroplast. It is found in the chloroplast thylakoid membrane. In terms of biological role, rod-core linker protein required for attachment of phycocyanin to allophycocyanin in cores of phycobilisomes. Linker polypeptides determine the state of aggregation and the location of the disk-shaped phycobiliprotein units within the phycobilisome and modulate their spectroscopic properties in order to mediate a directed and optimal energy transfer. The sequence is that of Phycobilisome rod-core linker polypeptide cpcG (cpcG) from Pyropia yezoensis (Susabi-nori).